A 255-amino-acid polypeptide reads, in one-letter code: Hydroxyacylglutathione hydrolase (255 aa).

Positions 56, 58, 60, 61, 114, 133, and 171 each coordinate Zn(2+).

It belongs to the metallo-beta-lactamase superfamily. Glyoxalase II family. As to quaternary structure, monomer. Zn(2+) is required as a cofactor.

It catalyses the reaction an S-(2-hydroxyacyl)glutathione + H2O = a 2-hydroxy carboxylate + glutathione + H(+). The protein operates within secondary metabolite metabolism; methylglyoxal degradation; (R)-lactate from methylglyoxal: step 2/2. In terms of biological role, thiolesterase that catalyzes the hydrolysis of S-D-lactoyl-glutathione to form glutathione and D-lactic acid. The protein is Hydroxyacylglutathione hydrolase of Bradyrhizobium sp. (strain BTAi1 / ATCC BAA-1182).